Here is a 421-residue protein sequence, read N- to C-terminus: MVRYILDHNLQDIDVEVFDCISGELNRQNSQLQLIASENFVSKAVLEAQGSIFTNKYAEGYPGKRYYCGCHFADIVENIAIERLCKLFGCKFANVQPHSGSQANQGVFAALLKPGDTVVGLSLDCGGHLTHGSAPSISGKWFNAVQYQVDRNTGLLDMDEIEKLVLEHKPTLLIAGSSAYPRTIDFKRFREIADKVGAYLLADIAHYAGLIAAGEFPSPFEYAHVVTSTTHKTLRGPRGAVIMTNYEDIHKKIQSSIFPGMQGGPLMHVIAAKAVAFGEALKPDFKDYAKQIIKNSRVLVEVFKERGLNIVTDGTDSHIVLVDLRPKGVTGKDAVLALERLGIICNKNAIPFDTEKPFVTSGLRFGSAAETSRGLQESEFREIGNMVCDVIDNLKASDIVKASVEQDVIKKVKELTFAFIS.

(6S)-5,6,7,8-tetrahydrofolate contacts are provided by residues Leu123 and 127–129; that span reads GHL. An N6-(pyridoxal phosphate)lysine modification is found at Lys232.

It belongs to the SHMT family. Homodimer. Pyridoxal 5'-phosphate is required as a cofactor.

The protein localises to the cytoplasm. The enzyme catalyses (6R)-5,10-methylene-5,6,7,8-tetrahydrofolate + glycine + H2O = (6S)-5,6,7,8-tetrahydrofolate + L-serine. The protein operates within one-carbon metabolism; tetrahydrofolate interconversion. It participates in amino-acid biosynthesis; glycine biosynthesis; glycine from L-serine: step 1/1. Catalyzes the reversible interconversion of serine and glycine with tetrahydrofolate (THF) serving as the one-carbon carrier. This reaction serves as the major source of one-carbon groups required for the biosynthesis of purines, thymidylate, methionine, and other important biomolecules. Also exhibits THF-independent aldolase activity toward beta-hydroxyamino acids, producing glycine and aldehydes, via a retro-aldol mechanism. The sequence is that of Serine hydroxymethyltransferase from Ehrlichia canis (strain Jake).